The sequence spans 257 residues: Granzyme M (257 aa).

The signal sequence occupies residues 1–23; sequence MEACVSSLLVLALGALSVGSSFG. The propeptide at 24-25 is activation peptide; sequence TQ. In terms of domain architecture, Peptidase S1 spans 26–254; it reads IIGGREVIPH…YVSWIRKVTG (229 aa). Cys51 and Cys67 are oxidised to a cystine. Catalysis depends on charge relay system residues His66 and Asp111. Intrachain disulfides connect Cys145–Cys213, Cys176–Cys192, and Cys203–Cys230. Residue Asn177 is glycosylated (N-linked (GlcNAc...) asparagine). Ser207 serves as the catalytic Charge relay system.

The protein belongs to the peptidase S1 family. Granzyme subfamily. In terms of tissue distribution, highly and constitutively expressed in activated natural killer (NK) cells.

The protein resides in the secreted. It is found in the cytoplasmic granule. Its function is as follows. Cleaves peptide substrates after methionine, leucine, and norleucine. Physiological substrates include EZR, alpha-tubulins and the apoptosis inhibitor BIRC5/Survivin. Promotes caspase activation and subsequent apoptosis of target cells. In Homo sapiens (Human), this protein is Granzyme M (GZMM).